The chain runs to 608 residues: Myosin light chain kinase 2, skeletal/cardiac muscle (608 aa).

The disordered stretch occupies residues 1–160 (MATENGAVEL…RGSPAFLHSP (160 aa)). N-acetylalanine is present on Ala2. Composition is skewed to basic and acidic residues over residues 31–43 (AAEK…DPEK) and 50–63 (TKQD…KKDA). Residues 82–91 (GSQGPAGEGG) are compositionally biased toward gly residues. The segment covering 116–127 (ASEKKPEAEKGP) has biased composition (basic and acidic residues). Ser153, Ser159, and Ser161 each carry phosphoserine. The interval 214-235 (QKEAGEKAPGQADQAKVQGDTS) is disordered. Positions 297-552 (MNSKEALGGG…AAQCLAHPWL (256 aa)) constitute a Protein kinase domain. ATP contacts are provided by residues 303 to 311 (LGGGKFGAV) and Lys326. The active-site Proton acceptor is the Asp418. At Thr457 the chain carries Phosphothreonine. Residues 586–598 (IAVSAANRFKKIS) are calmodulin-binding.

Belongs to the protein kinase superfamily. CAMK Ser/Thr protein kinase family. In terms of assembly, may interact with centrin.

The protein resides in the cytoplasm. The enzyme catalyses L-seryl-[myosin light chain] + ATP = O-phospho-L-seryl-[myosin light chain] + ADP + H(+). It carries out the reaction L-threonyl-[myosin light chain] + ATP = O-phospho-L-threonyl-[myosin light chain] + ADP + H(+). Functionally, implicated in the level of global muscle contraction and cardiac function. Phosphorylates a specific serine in the N-terminus of a myosin light chain. In Oryctolagus cuniculus (Rabbit), this protein is Myosin light chain kinase 2, skeletal/cardiac muscle (MYLK2).